Consider the following 306-residue polypeptide: Lipid A biosynthesis palmitoleoyltransferase (306 aa).

Residues 20–40 traverse the membrane as a helical segment; the sequence is WFGLGVLWLWVQLPYPVLCFL. An HXXXXD motif motif is present at residues 132 to 137; sequence HFMSLE.

The protein belongs to the LpxL/LpxM/LpxP family. LpxP subfamily.

Its subcellular location is the cell inner membrane. It carries out the reaction (9Z)-hexadecenoyl-[ACP] + alpha-Kdo-(2-&gt;4)-alpha-Kdo-(2-&gt;6)-lipid IVA (E. coli) = (9Z)-hexadecenoyl-(Kdo)2-lipid IVA (E. coli) + holo-[ACP]. The protein operates within bacterial outer membrane biogenesis; lipopolysaccharide biosynthesis. Functionally, catalyzes the transfer of palmitoleate from palmitoleoyl-[acyl-carrier-protein] (ACP) to Kdo(2)-lipid IV(A) to form Kdo(2)-(palmitoleoyl)-lipid IV(A). Required for the biosynthesis of a distinct molecular species of lipid A, which is present only in cells grown at low temperatures. It may confer a selective advantage to cells growing at lower temperatures by making the outer membrane a more effective barrier to harmful chemicals. The sequence is that of Lipid A biosynthesis palmitoleoyltransferase from Escherichia coli (strain K12).